Reading from the N-terminus, the 859-residue chain is Rod cGMP-specific 3',5'-cyclic phosphodiesterase subunit alpha (859 aa).

Glycine 2 is subject to N-acetylglycine. GAF domains follow at residues 73–222 and 254–431; these read QAEK…NLIM and DIER…GWSV. The 334-residue stretch at 483–816 folds into the PDEase domain; sequence EEEELAEILQ…KEWKALADEY (334 aa). The Proton donor role is filled by histidine 559. Histidine 563, histidine 599, aspartate 600, and aspartate 720 together coordinate a divalent metal cation. Residues 821-859 form a disordered region; that stretch reads KGLEEEKQKQQAANQAAAGSQHGGKQPGGGPASKSCCVQ. Residues 830 to 840 are compositionally biased toward low complexity; the sequence is QQAANQAAAGS. The span at 841-851 shows a compositional bias: gly residues; that stretch reads QHGGKQPGGGP. Residue cysteine 856 is modified to Cysteine methyl ester. Cysteine 856 carries the S-farnesyl cysteine lipid modification. The propeptide at 857–859 is removed in mature form; the sequence is CVQ.

Belongs to the cyclic nucleotide phosphodiesterase family. Oligomer composed of two catalytic chains (alpha and beta), an inhibitory chain (gamma) and the delta chain. Requires a divalent metal cation as cofactor.

Its subcellular location is the cell membrane. It localises to the cell projection. The protein resides in the cilium. It is found in the photoreceptor outer segment. It catalyses the reaction 3',5'-cyclic GMP + H2O = GMP + H(+). Its function is as follows. Rod-specific cGMP phosphodiesterase that catalyzes the hydrolysis of 3',5'-cyclic GMP. This protein participates in processes of transmission and amplification of the visual signal. This chain is Rod cGMP-specific 3',5'-cyclic phosphodiesterase subunit alpha, found in Bos taurus (Bovine).